The primary structure comprises 416 residues: MHMPPHLPASPPLSWPQRLEALLKDLTNFPWKSTARTLRERYSEDRLGLTASSLTFTTTMALVPLVTVALAIFTAFPMFAKLQSVLQKWLVTSLIPDNIARQVLGYLTQFAGQASKLGGAGIALLLVTAVALILTIDHTLNGIWRVRTRRSLGQRVLVYWAALTLGPLVLGVSLSITSYAISASKGVVGVMPGGVQFLLDVLQFFMVAWGMAAMYHFVPNTWVKWSHAWAGGMFVSAGLELAKKLLALYLGKVPTYSVLYGAFATVPILLIWIYVAWIIVLLGAVIAAYLPSLTSGIQHRGRSHGLQFQLALETLQQLERVRSDAVKGLTMQQLAQLLRVDALQLEPVLETLSELDWIGLLNEEFKGEAARYVMLANPDATALAPLLDTLLLRREESTQNLWEKGRWPLLNVRDVL.

The next 6 helical transmembrane spans lie at 60–80, 117–137, 156–176, 187–207, 222–242, and 268–288; these read MALV…PMFA, LGGA…LTID, VLVY…SLSI, VVGV…FFMV, WVKW…LELA, and ILLI…VIAA.

The protein belongs to the UPF0761 family.

Its subcellular location is the cell inner membrane. The sequence is that of UPF0761 membrane protein Rfer_2991 from Albidiferax ferrireducens (strain ATCC BAA-621 / DSM 15236 / T118) (Rhodoferax ferrireducens).